The chain runs to 371 residues: Phosphatase IMPL1, chloroplastic (371 aa).

The transit peptide at 1–60 (MGRSLIFSGNMSLRISHLPRSSLPLQNPISGRTVNRTFRYRCTRILSNSFKSTTRLQTKA) directs the protein to the chloroplast. N-acetylvaline is present on Val-61. Mg(2+) contacts are provided by Glu-148, Asp-165, Leu-167, and Asp-168. Residue Glu-148 participates in substrate binding. Residues 167-170 (LDGT), 273-275 (GAA), Glu-292, and Asp-299 contribute to the substrate site. Asp-299 contacts Mg(2+).

It belongs to the inositol monophosphatase superfamily. It depends on Mg(2+) as a cofactor. As to expression, ubiquitous. Expressed in pistil and seed endosperm.

The protein resides in the plastid. Its subcellular location is the chloroplast stroma. It catalyses the reaction a myo-inositol phosphate + H2O = myo-inositol + phosphate. It participates in polyol metabolism; myo-inositol biosynthesis; myo-inositol from D-glucose 6-phosphate: step 2/2. Phosphatase acting preferentially on D-myoinositol 1-phosphate (D-Ins 1-P). The chain is Phosphatase IMPL1, chloroplastic (IMPL1) from Arabidopsis thaliana (Mouse-ear cress).